Reading from the N-terminus, the 142-residue chain is Small ribosomal subunit protein uS11 (142 aa).

Residues 1–21 (MPPKTRGAVRKPRRKDKKNIA) form a disordered region. Residues 7–17 (GAVRKPRRKDK) show a composition bias toward basic residues.

The protein belongs to the universal ribosomal protein uS11 family. As to quaternary structure, part of the 30S ribosomal subunit. Interacts with proteins S7 and S18. Binds to IF-3.

Its function is as follows. Located on the platform of the 30S subunit, it bridges several disparate RNA helices of the 16S rRNA. Forms part of the Shine-Dalgarno cleft in the 70S ribosome. This Paenarthrobacter aurescens (strain TC1) protein is Small ribosomal subunit protein uS11.